Reading from the N-terminus, the 146-residue chain is MIDVMQIQKILPHRYPFLLVDKIVELKTKQIVKGYKNISISDHVFMGHFPDHPIYPGVLILEGMAQTGGVLAFESMDDKVDPSSKVVYFTGIDNAKFRNPVRPGDRLDYEMSVVKNRGNLWIFEGKAFVDGQLVAEAELKAMIVDK.

Histidine 48 is a catalytic residue.

The protein belongs to the thioester dehydratase family. FabZ subfamily.

It is found in the cytoplasm. It catalyses the reaction a (3R)-hydroxyacyl-[ACP] = a (2E)-enoyl-[ACP] + H2O. Functionally, involved in unsaturated fatty acids biosynthesis. Catalyzes the dehydration of short chain beta-hydroxyacyl-ACPs and long chain saturated and unsaturated beta-hydroxyacyl-ACPs. This Campylobacter lari (strain RM2100 / D67 / ATCC BAA-1060) protein is 3-hydroxyacyl-[acyl-carrier-protein] dehydratase FabZ.